The following is a 202-amino-acid chain: Small ribosomal subunit protein uS4 (202 aa).

The disordered stretch occupies residues 15–42 (LGDLPGLTRKAAKRSYPPGQHGQARRKR). The S4 RNA-binding domain occupies 90 to 152 (NRLDNVCFRI…KCSKLLAEAN (63 aa)).

This sequence belongs to the universal ribosomal protein uS4 family. In terms of assembly, part of the 30S ribosomal subunit. Contacts protein S5. The interaction surface between S4 and S5 is involved in control of translational fidelity.

Functionally, one of the primary rRNA binding proteins, it binds directly to 16S rRNA where it nucleates assembly of the body of the 30S subunit. In terms of biological role, with S5 and S12 plays an important role in translational accuracy. The polypeptide is Small ribosomal subunit protein uS4 (Synechococcus sp. (strain CC9311)).